The primary structure comprises 117 residues: Cell division protein FtsB (117 aa).

The Cytoplasmic portion of the chain corresponds to 1–6 (MRDWRW). Residues 7–24 (MLLVLALLLGWLQYRFWF) traverse the membrane as a helical segment. The Periplasmic segment spans residues 25 to 117 (GPGNSGEVMM…QVGDHPADVP (93 aa)). The stretch at 29–69 (SGEVMMLEAQVANQERDNEGLQQRNDALAAEVKDLKEGQSA) forms a coiled coil.

This sequence belongs to the FtsB family. In terms of assembly, part of a complex composed of FtsB, FtsL and FtsQ.

Its subcellular location is the cell inner membrane. Its function is as follows. Essential cell division protein. May link together the upstream cell division proteins, which are predominantly cytoplasmic, with the downstream cell division proteins, which are predominantly periplasmic. In Stenotrophomonas maltophilia (strain K279a), this protein is Cell division protein FtsB.